The chain runs to 487 residues: MQKNNENILRRGRLGSSTKKEVMNYMTSLSFDKEIFESDIFCDIAHTKMLMEQNIILEEDGIKIINELKKIYNNGMDCLNLDPSLDDIHMVIESELIKNLGEDVAGRMHTGRSRNDEVATDLRMALRDKILTILKLLINMQKNILNLAKEHKETLTIGYTHLQHAQPITFGHHLLSYASPMERDILRLIDTYKRVNICPLGSGAFATTGFNINRNATKELLGFDSVIENSMDGVASRDFILETMANLSILGTNLSKICEEMVLFSSCEFGTIDLANEYTSTSSIMPQKKNPDVAEIARAKLSTLNGNLVTVLTILKALPNTYNRDLQEISPHLWDSVYTTIDTLKIIDGMISTIKVNADRMKELTEKNYSTATELADTLVRECNIPFRTAHGIVGEVVRLSIENNKNMNEVIRDVLDKFNLKLDDSKIEKALNPMENVKMRKVIGGPAPEEVERAINSYYSRIENYEKEVNDKIEKIEIIKNNLLNL.

It belongs to the lyase 1 family. Argininosuccinate lyase subfamily.

Its subcellular location is the cytoplasm. The enzyme catalyses 2-(N(omega)-L-arginino)succinate = fumarate + L-arginine. It functions in the pathway amino-acid biosynthesis; L-arginine biosynthesis; L-arginine from L-ornithine and carbamoyl phosphate: step 3/3. This Methanococcus aeolicus (strain ATCC BAA-1280 / DSM 17508 / OCM 812 / Nankai-3) protein is Argininosuccinate lyase.